We begin with the raw amino-acid sequence, 610 residues long: ABC transporter ATP-binding protein/permease wht-3 (610 aa).

The region spanning 42 to 277 (VKTRKKLFSK…FADCGHPIPK (236 aa)) is the ABC transporter domain. Residue 74–81 (GASGAGKT) participates in ATP binding. The next 5 membrane-spanning stretches (helical) occupy residues 396–416 (ALYF…MTFM), 446–466 (LPLF…MIGL), 477–497 (ILIS…LACL), 503–523 (LAIA…GLYG), and 584–604 (VIGL…ALFI).

It belongs to the ABC transporter superfamily. ABCG family. Eye pigment precursor importer (TC 3.A.1.204) subfamily.

Its subcellular location is the membrane. In terms of biological role, required for efficient RNA interference (RNAi) of pop-1 indicating a role in the germline development. This is ABC transporter ATP-binding protein/permease wht-3 (wht-3) from Caenorhabditis elegans.